The chain runs to 524 residues: CTP synthase (524 aa).

The amidoligase domain stretch occupies residues 1 to 263; it reads MKKYVIVTGG…HEKIASKLNV (263 aa). S13 serves as a coordination point for CTP. A UTP-binding site is contributed by S13. Residues 14 to 19 and D71 each bind ATP; that span reads GIGKGI. 2 residues coordinate Mg(2+): D71 and E137. CTP contacts are provided by residues 144 to 146, 184 to 189, and K220; these read DIE and KTKPTQ. Residues 184 to 189 and K220 contribute to the UTP site; that span reads KTKPTQ. Residues 282-524 form the Glutamine amidotransferase type-1 domain; the sequence is RIALVGKYLG…YLRKVLEGSQ (243 aa). G342 provides a ligand contact to L-glutamine. The Nucleophile; for glutamine hydrolysis role is filled by C369. Residues 370-373, E393, and R451 each bind L-glutamine; that span reads LGMQ. Active-site residues include H499 and E501.

This sequence belongs to the CTP synthase family. Homotetramer.

The enzyme catalyses UTP + L-glutamine + ATP + H2O = CTP + L-glutamate + ADP + phosphate + 2 H(+). It carries out the reaction L-glutamine + H2O = L-glutamate + NH4(+). The catalysed reaction is UTP + NH4(+) + ATP = CTP + ADP + phosphate + 2 H(+). It participates in pyrimidine metabolism; CTP biosynthesis via de novo pathway; CTP from UDP: step 2/2. Allosterically activated by GTP, when glutamine is the substrate; GTP has no effect on the reaction when ammonia is the substrate. The allosteric effector GTP functions by stabilizing the protein conformation that binds the tetrahedral intermediate(s) formed during glutamine hydrolysis. Inhibited by the product CTP, via allosteric rather than competitive inhibition. Catalyzes the ATP-dependent amination of UTP to CTP with either L-glutamine or ammonia as the source of nitrogen. Regulates intracellular CTP levels through interactions with the four ribonucleotide triphosphates. The sequence is that of CTP synthase from Thermotoga maritima (strain ATCC 43589 / DSM 3109 / JCM 10099 / NBRC 100826 / MSB8).